The sequence spans 233 residues: MTKLSKRVKAIQSKVDRNKFYPLEDALNLVKECATAKFDESIDVAVQLGIDAKKSDQVVRGAVVLPAGTGKHVRVAVFAQGEKAEQAKAAGAEIVGMEELAEQIKGGKIDFDILIASPDTMKIVGTLGQVLGPRGLMPNPKVGTVTPDVATAVKNAKAGQVQFRVDKAGIVHASIGRRSFEPAALKSNLLALLEALNKAKPPASKGIYLKKVAVSSTMGAGVRVDQASLQAAA.

Belongs to the universal ribosomal protein uL1 family. Part of the 50S ribosomal subunit.

Functionally, binds directly to 23S rRNA. The L1 stalk is quite mobile in the ribosome, and is involved in E site tRNA release. Its function is as follows. Protein L1 is also a translational repressor protein, it controls the translation of the L11 operon by binding to its mRNA. In Polynucleobacter asymbioticus (strain DSM 18221 / CIP 109841 / QLW-P1DMWA-1) (Polynucleobacter necessarius subsp. asymbioticus), this protein is Large ribosomal subunit protein uL1.